Here is a 452-residue protein sequence, read N- to C-terminus: Eukaryotic translation initiation factor 3 subunit E (452 aa).

A compositionally biased stretch (polar residues) spans 1 to 17 (MADNTPTTANDLLNDAT). The interval 1-23 (MADNTPTTANDLLNDATQAAAKS) is disordered. Residues 246–426 (PFFNHEPARD…GTVVMNHPPS (181 aa)) enclose the PCI domain.

It belongs to the eIF-3 subunit E family. As to quaternary structure, component of the eukaryotic translation initiation factor 3 (eIF-3) complex.

It localises to the cytoplasm. Its function is as follows. Component of the eukaryotic translation initiation factor 3 (eIF-3) complex, which is involved in protein synthesis of a specialized repertoire of mRNAs and, together with other initiation factors, stimulates binding of mRNA and methionyl-tRNAi to the 40S ribosome. The eIF-3 complex specifically targets and initiates translation of a subset of mRNAs involved in cell proliferation. This chain is Eukaryotic translation initiation factor 3 subunit E (int6), found in Botryotinia fuckeliana (strain B05.10) (Noble rot fungus).